The chain runs to 107 residues: Large ribosomal subunit protein bL21 (107 aa).

It belongs to the bacterial ribosomal protein bL21 family. Part of the 50S ribosomal subunit. Contacts protein L20.

In terms of biological role, this protein binds to 23S rRNA in the presence of protein L20. This Chlamydia trachomatis serovar L2 (strain ATCC VR-902B / DSM 19102 / 434/Bu) protein is Large ribosomal subunit protein bL21.